Reading from the N-terminus, the 124-residue chain is uncharacterized protein (124 aa).

The disordered stretch occupies residues 44–92; sequence DRVENSGNGTGSISAPLTDLGPSIGDSHENKGADIPIHPPLDTQSHAKD. The span at 48-58 shows a compositional bias: polar residues; it reads NSGNGTGSISA.

This is an uncharacterized protein from Caenorhabditis elegans.